We begin with the raw amino-acid sequence, 371 residues long: Deoxyuridine 5'-triphosphate nucleotidohydrolase (371 aa).

Residues 260 to 262 (RSS) and 366 to 367 (FG) contribute to the substrate site. A disordered region spans residues 350–371 (NEFDAEAPPSERGTGGFGSTGI). Gly residues predominate over residues 362–371 (GTGGFGSTGI).

This sequence belongs to the dUTPase family. The cofactor is Mg(2+).

The enzyme catalyses dUTP + H2O = dUMP + diphosphate + H(+). Functionally, involved in nucleotide metabolism: produces dUMP, the immediate precursor of thymidine nucleotides and decreases the intracellular concentration of dUTP to avoid uracil incorporation into viral DNA. The chain is Deoxyuridine 5'-triphosphate nucleotidohydrolase from Homo sapiens (Human).